A 471-amino-acid chain; its full sequence is ATP synthase subunit beta (471 aa).

ATP is bound at residue 156 to 163 (GGAGVGKT).

It belongs to the ATPase alpha/beta chains family. As to quaternary structure, F-type ATPases have 2 components, CF(1) - the catalytic core - and CF(0) - the membrane proton channel. CF(1) has five subunits: alpha(3), beta(3), gamma(1), delta(1), epsilon(1). CF(0) has three main subunits: a(1), b(2) and c(9-12). The alpha and beta chains form an alternating ring which encloses part of the gamma chain. CF(1) is attached to CF(0) by a central stalk formed by the gamma and epsilon chains, while a peripheral stalk is formed by the delta and b chains.

The protein resides in the cell membrane. The catalysed reaction is ATP + H2O + 4 H(+)(in) = ADP + phosphate + 5 H(+)(out). Functionally, produces ATP from ADP in the presence of a proton gradient across the membrane. The catalytic sites are hosted primarily by the beta subunits. This chain is ATP synthase subunit beta, found in Macrococcus caseolyticus (strain JCSC5402) (Macrococcoides caseolyticum).